We begin with the raw amino-acid sequence, 782 residues long: Protein phosphatase 1 regulatory subunit 12C (782 aa).

Low complexity-rich tracts occupy residues 1–19 (MSGE…AAAA) and 77–88 (DPGPGSGAASDP). Disordered stretches follow at residues 1–45 (MSGE…GERR) and 77–98 (DPGP…RAVL). S2 carries the N-acetylserine modification. ANK repeat units follow at residues 104–133 (DGIS…TVNQ), 137–166 (EGWT…NIAA), 230–259 (TGAS…DTEL), and 263–292 (DGWT…GMDS). A coiled-coil region spans residues 301–332 (CDLADEDVMNLLEELAQKQEDLRNQKEGSQGR). The disordered stretch occupies residues 321 to 685 (DLRNQKEGSQ…HEEPDGGFRK (365 aa)). The segment covering 332 to 341 (RGQESQVPSS) has biased composition (polar residues). Residues 353–369 (SSREKISLQDLSKERRP) show a composition bias toward basic and acidic residues. Low complexity predominate over residues 401–413 (VSSPVSSNPKSPV). A phosphoserine mark is found at S403, S411, S431, S454, and S509. A compositionally biased stretch (polar residues) spans 451-465 (RSASSSLLEKASTQA). Residues 537–546 (VRDEESESQR) are compositionally biased toward basic and acidic residues. A compositionally biased stretch (basic residues) spans 547 to 557 (KARSRLMRQSR). The residue at position 560 (T560) is a Phosphothreonine. S647 bears the Phosphoserine mark. Positions 664 to 685 (SQRDLVLESKQEHEEPDGGFRK) are enriched in basic and acidic residues. Positions 681 to 782 (GGFRKMYTEL…LIRVISKLSK (102 aa)) form a coiled coil.

In terms of assembly, PP1 comprises a catalytic subunit, PPP1CA, PPP1CB or PPP1CC, and one or several targeting or regulatory subunits. PPP1R12C mediates binding to myosin. Interacts via its N-terminus with PPP1CB. Interacts with IL16. Interacts with the coiled-coil domain of MPRIP. Interacts with NOD2. Phosphorylation at Thr-560 is essential for its interaction with PPP1CB.

It is found in the cytoplasm. The protein localises to the cytoskeleton. It localises to the stress fiber. Its function is as follows. Regulates myosin phosphatase activity. The polypeptide is Protein phosphatase 1 regulatory subunit 12C (Mus musculus (Mouse)).